Consider the following 354-residue polypeptide: Type II restriction enzyme BanI (354 aa).

As to quaternary structure, homodimer.

The catalysed reaction is Endonucleolytic cleavage of DNA to give specific double-stranded fragments with terminal 5'-phosphates.. In terms of biological role, a P subtype restriction enzyme that recognizes the double-stranded sequence 5'-GGYRCC-3' and cleaves after G-1. The sequence is that of Type II restriction enzyme BanI (banIR) from Aneurinibacillus aneurinilyticus (Bacillus aneurinolyticus).